Consider the following 61-residue polypeptide: MNAKFILLLLVVATTMLLPDTQGAEVIKCRTPKDCAGPCRKQTGCPHGKCMNRTCRCNRCG.

The N-terminal stretch at 1 to 23 is a signal peptide; the sequence is MNAKFILLLLVVATTMLLPDTQG. 4 disulfides stabilise this stretch: Cys29/Cys50, Cys35/Cys55, Cys39/Cys57, and Cys45/Cys60. Residue Cys60 is modified to Cysteine amide.

This sequence belongs to the short scorpion toxin superfamily. Potassium channel inhibitor family. Alpha-KTx 06 subfamily. In terms of tissue distribution, expressed by the venom gland.

It localises to the secreted. Blocker of voltage-gated potassium channels. The protein is Potassium channel toxin alpha-KTx 6.6 of Opistophthalmus carinatus (African yellow leg scorpion).